A 233-amino-acid chain; its full sequence is Proteasome subunit alpha (233 aa).

Belongs to the peptidase T1A family. In terms of assembly, the 20S proteasome core is composed of 14 alpha and 14 beta subunits that assemble into four stacked heptameric rings, resulting in a barrel-shaped structure. The two inner rings, each composed of seven catalytic beta subunits, are sandwiched by two outer rings, each composed of seven alpha subunits. The catalytic chamber with the active sites is on the inside of the barrel. Has a gated structure, the ends of the cylinder being occluded by the N-termini of the alpha-subunits. Is capped at one or both ends by the proteasome regulatory ATPase, PAN. The N-terminus is blocked.

It is found in the cytoplasm. Its activity is regulated as follows. The formation of the proteasomal ATPase PAN-20S proteasome complex, via the docking of the C-termini of PAN into the intersubunit pockets in the alpha-rings, triggers opening of the gate for substrate entry. Interconversion between the open-gate and close-gate conformations leads to a dynamic regulation of the 20S proteasome proteolysis activity. Component of the proteasome core, a large protease complex with broad specificity involved in protein degradation. The T.acidophilum proteasome is able to cleave oligopeptides after Tyr, Leu, Phe, and to a lesser extent after Glu and Arg. Thus, displays chymotrypsin-like activity and low level of caspase-like and trypsin-like activities. This chain is Proteasome subunit alpha, found in Thermoplasma acidophilum (strain ATCC 25905 / DSM 1728 / JCM 9062 / NBRC 15155 / AMRC-C165).